An 84-amino-acid chain; its full sequence is FMRFamide-like neuropeptides 26 (84 aa).

A signal peptide spans 1–19 (MKVMFMLALLFSSLVATSA). A propeptide spanning residues 20–48 (FRLPFQFFGANEDFNSGLTKRNYYESKPY) is cleaved from the precursor. 2 positions are modified to phenylalanine amide: F61 and F82.

This sequence belongs to the FARP (FMRFamide related peptide) family. As to expression, each flp gene is expressed in a distinct set of neurons.

Its subcellular location is the secreted. FMRFamides and FMRFamide-like peptides are neuropeptides. This Caenorhabditis elegans protein is FMRFamide-like neuropeptides 26.